A 471-amino-acid chain; its full sequence is GDP-fucose protein O-fucosyltransferase 3 (471 aa).

Topologically, residues 1-8 (MNRMWEKK) are cytoplasmic. The helical; Signal-anchor for type II membrane protein transmembrane segment at 9–29 (FWISCFFIILFFILVTLQVMV) threads the bilayer. The Lumenal portion of the chain corresponds to 30 to 471 (ELGRFEKRET…EFWNLVFKFQ (442 aa)). N-linked (GlcNAc...) asparagine glycans are attached at residues Asn-102, Asn-122, Asn-160, and Asn-310. Cys-381 and Cys-384 are joined by a disulfide. A glycan (N-linked (GlcNAc...) asparagine) is linked at Asn-457.

This sequence belongs to the glycosyltransferase 10 family.

Its subcellular location is the endoplasmic reticulum membrane. It carries out the reaction L-threonyl-[protein] + GDP-beta-L-fucose = 3-O-(alpha-L-fucosyl)-L-threonyl-[protein] + GDP + H(+). The enzyme catalyses L-seryl-[protein] + GDP-beta-L-fucose = 3-O-(alpha-L-fucosyl)-L-seryl-[protein] + GDP + H(+). It functions in the pathway protein modification; protein glycosylation. Its function is as follows. Protein O-fucosyltransferase that specifically catalyzes O-fucosylation of serine or threonine residues in EMI domains of target proteins. Attaches fucose through an O-glycosidic linkage. O-fucosylation of EMI domain-containing proteins may be required for facilitating protein folding and secretion. This Xenopus tropicalis (Western clawed frog) protein is GDP-fucose protein O-fucosyltransferase 3 (fut10).